Here is a 219-residue protein sequence, read N- to C-terminus: Ribose-5-phosphate isomerase A (219 aa).

Substrate-binding positions include 28-31 (TGST), 81-84 (DGAD), and 94-97 (KGGG). Residue Glu103 is the Proton acceptor of the active site. Substrate is bound at residue Lys121.

The protein belongs to the ribose 5-phosphate isomerase family. As to quaternary structure, homodimer.

The enzyme catalyses aldehydo-D-ribose 5-phosphate = D-ribulose 5-phosphate. It functions in the pathway carbohydrate degradation; pentose phosphate pathway; D-ribose 5-phosphate from D-ribulose 5-phosphate (non-oxidative stage): step 1/1. Catalyzes the reversible conversion of ribose-5-phosphate to ribulose 5-phosphate. In Shewanella loihica (strain ATCC BAA-1088 / PV-4), this protein is Ribose-5-phosphate isomerase A.